Consider the following 159-residue polypeptide: SsrA-binding protein (159 aa).

A disordered region spans residues 133 to 159 (KKLHDKRETSKERDWNRQKNRLLKERG). Basic and acidic residues predominate over residues 137–159 (DKRETSKERDWNRQKNRLLKERG).

This sequence belongs to the SmpB family.

The protein resides in the cytoplasm. Functionally, required for rescue of stalled ribosomes mediated by trans-translation. Binds to transfer-messenger RNA (tmRNA), required for stable association of tmRNA with ribosomes. tmRNA and SmpB together mimic tRNA shape, replacing the anticodon stem-loop with SmpB. tmRNA is encoded by the ssrA gene; the 2 termini fold to resemble tRNA(Ala) and it encodes a 'tag peptide', a short internal open reading frame. During trans-translation Ala-aminoacylated tmRNA acts like a tRNA, entering the A-site of stalled ribosomes, displacing the stalled mRNA. The ribosome then switches to translate the ORF on the tmRNA; the nascent peptide is terminated with the 'tag peptide' encoded by the tmRNA and targeted for degradation. The ribosome is freed to recommence translation, which seems to be the essential function of trans-translation. This chain is SsrA-binding protein, found in Sinorhizobium medicae (strain WSM419) (Ensifer medicae).